We begin with the raw amino-acid sequence, 313 residues long: Porphobilinogen deaminase (313 aa).

Residue cysteine 242 is modified to S-(dipyrrolylmethanemethyl)cysteine.

The protein belongs to the HMBS family. Monomer. Dipyrromethane serves as cofactor.

It carries out the reaction 4 porphobilinogen + H2O = hydroxymethylbilane + 4 NH4(+). It functions in the pathway porphyrin-containing compound metabolism; protoporphyrin-IX biosynthesis; coproporphyrinogen-III from 5-aminolevulinate: step 2/4. In terms of biological role, tetrapolymerization of the monopyrrole PBG into the hydroxymethylbilane pre-uroporphyrinogen in several discrete steps. This chain is Porphobilinogen deaminase, found in Escherichia coli (strain SE11).